We begin with the raw amino-acid sequence, 68 residues long: Neuronal regeneration-related protein (68 aa).

The disordered stretch occupies residues 21-54 (MEGRLPKGRLPVPKEVNRKKNDETNAASLTPLGS). The span at 44 to 54 (TNAASLTPLGS) shows a compositional bias: polar residues.

In terms of assembly, interacts with the latency-associated peptides (LAP) of TGFB1 and TGFB2; the interaction results in a decrease in TGFB autoinduction. Interacts with FLNA. Phosphorylated on Ser-59. Phosphorylation decreases stability and activity.

It is found in the cytoplasm. May have roles in neural function and cellular differentiation. Ectopic expression promotes axonal regeneration, induces differentiation of fibroblast into myofibroblast, induces myofibroblast ameboid migration, augments motility of gliomas, and increases retinoic-acid regulation of lipid-droplet biogenesis. Down-regulates the expression of TGFB1 and TGFB2 but not of TGFB3. May play a role in the regulation of alveolar generation. The polypeptide is Neuronal regeneration-related protein (NREP) (Macaca fascicularis (Crab-eating macaque)).